Here is a 950-residue protein sequence, read N- to C-terminus: Protocadherin alpha-1 (950 aa).

Positions 1-29 (MVFSRRGGLGARDLLLWLLLLAAWEVGSG) are cleaved as a signal peptide. Cadherin domains are found at residues 30 to 133 (QLHY…PPVF), 157 to 242 (AADA…APLF), 243 to 350 (DQAV…APEL), 351 to 455 (AVTS…APAF), 456 to 565 (AQPE…APAL), and 588 to 678 (GHVV…APKA). Residues 30 to 697 (QLHYSIPEEA…GPEAALVDVN (668 aa)) are Extracellular-facing. Asparagine 257 and asparagine 265 each carry an N-linked (GlcNAc...) asparagine glycan. Asparagine 548 is a glycosylation site (N-linked (GlcNAc...) asparagine). Residues 698-718 (VYLIIAICAVSSLLVLTLLLY) form a helical membrane-spanning segment. Residues 719-950 (TALRCSVPPT…GNSTTDNSDQ (232 aa)) are Cytoplasmic-facing. PXXP repeat units lie at residues 734–737 (PGKP), 799–802 (PRQP), 832–835 (PGGP), 873–876 (PGNP), and 891–894 (PGSP). The segment at 734–894 (PGKPTLVCSS…PDKFIIPGSP (161 aa)) is 5 X 4 AA repeats of P-X-X-P. Disordered stretches follow at residues 752–808 (QQRR…DWRY), 828–856 (LRAGPGGPDQQWPTVSSATPEPEAGEVSP), and 871–890 (YGPGNPKQSGPGELPDKFII). Residues 900-950 (RQEPTNSQIDKSDFITFGKKEETKKKKKKKKGNKTQEKKEKGNSTTDNSDQ) form a disordered region. The span at 909 to 923 (DKSDFITFGKKEETK) shows a compositional bias: basic and acidic residues.

The protein resides in the cell membrane. Its subcellular location is the secreted. In terms of biological role, potential calcium-dependent cell-adhesion protein. May be involved in the establishment and maintenance of specific neuronal connections in the brain. The sequence is that of Protocadherin alpha-1 (PCDHA1) from Homo sapiens (Human).